A 341-amino-acid chain; its full sequence is MPYHSSTKSRAVSTWLLVVAALVCAMIIIGGTTRLTDSGLSITEWKPISGAIPPLSQQDWQDEFALYQQTTEFQVQNSAMTLDEFEFIFWWEWGHRQLGRLIGLVYFVPFVFFWMRGHLSARLKSRLFGLFLLGGAQGAIGWWMVASGLSDRLDVSQYRLATHLGMAFVILGLSIWFSLEARHGPPPLRRGRLAGVTAGLLGLVFVQIILGAFVAGLDAGRIYNTWPLMNGDLIPEGYLGGMNFFPAIFESHAAVQMHHRWTGYLVALGVFAYAWQVWREPRVSLKPFMVILPALVIGQIALGIAALLAVVPLSLSLAHQAGAILLFIAMVAAAWTARRAV.

The next 5 membrane-spanning stretches (helical) occupy residues 11-31, 101-121, 127-147, 160-180, and 194-214; these read AVSTWLLVVAALVCAMIIIGG, LIGLVYFVPFVFFWMRGHLSA, LFGLFLLGGAQGAIGWWMVAS, LATHLGMAFVILGLSIWFSLE, and AGVTAGLLGLVFVQIILGAFV. His-259 serves as a coordination point for heme. The next 3 membrane-spanning stretches (helical) occupy residues 261–278, 288–308, and 315–335; these read WTGYLVALGVFAYAWQVW, FMVILPALVIGQIALGIAALL, and LSLAHQAGAILLFIAMVAAAW. His-319 lines the heme pocket.

Belongs to the COX15/CtaA family. Type 2 subfamily. Interacts with CtaB. Requires heme b as cofactor.

Its subcellular location is the cell membrane. The enzyme catalyses Fe(II)-heme o + 2 A + H2O = Fe(II)-heme a + 2 AH2. Its pathway is porphyrin-containing compound metabolism; heme A biosynthesis; heme A from heme O: step 1/1. Its function is as follows. Catalyzes the conversion of heme O to heme A by two successive hydroxylations of the methyl group at C8. The first hydroxylation forms heme I, the second hydroxylation results in an unstable dihydroxymethyl group, which spontaneously dehydrates, resulting in the formyl group of heme A. The polypeptide is Heme A synthase (Maricaulis maris (strain MCS10) (Caulobacter maris)).